Here is a 176-residue protein sequence, read N- to C-terminus: NAD(P)H-quinone oxidoreductase subunit 6, chloroplastic (176 aa).

5 consecutive transmembrane segments (helical) span residues 10–30 (FLLV…VLLT), 32–52 (PIYS…FYIL), 61–81 (AQLL…VMFM), 92–112 (LWTL…LSLI), and 152–172 (FFLP…GAIA).

The protein belongs to the complex I subunit 6 family. In terms of assembly, NDH is composed of at least 16 different subunits, 5 of which are encoded in the nucleus.

Its subcellular location is the plastid. The protein resides in the chloroplast thylakoid membrane. The enzyme catalyses a plastoquinone + NADH + (n+1) H(+)(in) = a plastoquinol + NAD(+) + n H(+)(out). It carries out the reaction a plastoquinone + NADPH + (n+1) H(+)(in) = a plastoquinol + NADP(+) + n H(+)(out). NDH shuttles electrons from NAD(P)H:plastoquinone, via FMN and iron-sulfur (Fe-S) centers, to quinones in the photosynthetic chain and possibly in a chloroplast respiratory chain. The immediate electron acceptor for the enzyme in this species is believed to be plastoquinone. Couples the redox reaction to proton translocation, and thus conserves the redox energy in a proton gradient. This Pelargonium hortorum (Common geranium) protein is NAD(P)H-quinone oxidoreductase subunit 6, chloroplastic (ndhG).